The primary structure comprises 515 residues: Ent-isokaurene C2/C3-hydroxylase (515 aa).

A helical membrane pass occupies residues 5–25 (LILDLCLSALFVVVLSKLVSS). Cys452 is a heme binding site.

The protein belongs to the cytochrome P450 family. It depends on heme as a cofactor.

The protein localises to the membrane. The enzyme catalyses ent-isokaurene + 2 reduced [NADPH--hemoprotein reductase] + 2 O2 = ent-isokaurene-2beta,3beta-diol + 2 oxidized [NADPH--hemoprotein reductase] + 2 H2O + 2 H(+). Functionally, enzyme of the diterpenoid metabolism involved in the biosynthesis of antibacterial oryzalides such as phytocassane. This chain is Ent-isokaurene C2/C3-hydroxylase (CYP71Z6), found in Oryza sativa subsp. japonica (Rice).